A 276-amino-acid polypeptide reads, in one-letter code: Undecaprenyl-diphosphatase (276 aa).

Helical transmembrane passes span 42 to 62 (AVTA…IVYF), 88 to 108 (ALLG…GYLG), 116 to 136 (LRSL…IVYA), 149 to 169 (MRLP…VPGV), 187 to 207 (VAAT…AGIF), 222 to 242 (SLVV…AWLL), and 253 to 273 (FVWY…TGLV).

Belongs to the UppP family.

It is found in the cell membrane. The enzyme catalyses di-trans,octa-cis-undecaprenyl diphosphate + H2O = di-trans,octa-cis-undecaprenyl phosphate + phosphate + H(+). In terms of biological role, catalyzes the dephosphorylation of undecaprenyl diphosphate (UPP). Confers resistance to bacitracin. In Acidothermus cellulolyticus (strain ATCC 43068 / DSM 8971 / 11B), this protein is Undecaprenyl-diphosphatase.